The chain runs to 234 residues: Large ribosomal subunit protein uL1 (234 aa).

Belongs to the universal ribosomal protein uL1 family. In terms of assembly, part of the 50S ribosomal subunit.

Functionally, binds directly to 23S rRNA. The L1 stalk is quite mobile in the ribosome, and is involved in E site tRNA release. Protein L1 is also a translational repressor protein, it controls the translation of the L11 operon by binding to its mRNA. This chain is Large ribosomal subunit protein uL1, found in Sulfurovum sp. (strain NBC37-1).